The primary structure comprises 719 residues: ATP-dependent RNA helicase SUV3 homolog, mitochondrial (719 aa).

The N-terminal 18 residues, 1 to 18 (MRRASGVLRVLGGLTQRC), are a transit peptide targeting the mitochondrion. The tract at residues 16–42 (QRCSTSSTPSSSRFPAMNSRRKRNSVR) is disordered. One can recognise a Helicase ATP-binding domain in the interval 181-319 (EARSVTRKIF…PAAIDIVKKL (139 aa)). 194-201 (GPTNSGKT) provides a ligand contact to ATP. Residues 343–499 (KAIESYSNIE…PTYDQIETFS (157 aa)) form the Helicase C-terminal domain. A disordered region spans residues 662-692 (SKAAGSSKSSEGKRENPSKSEREKPNKRSSI). Residues 671 to 687 (SEGKRENPSKSEREKPN) show a composition bias toward basic and acidic residues. Residues 693–717 (LEALLKRADISEDDLEQLREELNKN) adopt a coiled-coil conformation.

The protein belongs to the helicase family. Requires Mg(2+) as cofactor. It depends on Mn(2+) as a cofactor.

The protein resides in the mitochondrion matrix. It localises to the nucleus. The enzyme catalyses ATP + H2O = ADP + phosphate + H(+). In terms of biological role, ATPase and DNA/RNA helicase able to unwind DNA/DNA, DNA/RNA and RNA/RNA duplexes in the 5'-3' direction. The chain is ATP-dependent RNA helicase SUV3 homolog, mitochondrial from Caenorhabditis elegans.